The following is a 548-amino-acid chain: Probable delta-1-pyrroline-5-carboxylate dehydrogenase (548 aa).

The Proton acceptor role is filled by Glu-298. Residue Cys-332 is the Nucleophile of the active site. A phosphoserine mark is found at Ser-391, Ser-394, and Ser-396.

It belongs to the aldehyde dehydrogenase family.

The catalysed reaction is L-glutamate 5-semialdehyde + NAD(+) + H2O = L-glutamate + NADH + 2 H(+). Its pathway is amino-acid degradation; L-proline degradation into L-glutamate; L-glutamate from L-proline: step 2/2. The chain is Probable delta-1-pyrroline-5-carboxylate dehydrogenase from Schizosaccharomyces pombe (strain 972 / ATCC 24843) (Fission yeast).